The following is a 351-amino-acid chain: sn-1 oleoyl-lipid 12-desaturase (351 aa).

2 helical membrane-spanning segments follow: residues 46–66 (WASV…IIYL) and 68–88 (WYCL…AFVV). A Histidine box-1 motif is present at residues 90-94 (HDCGH). The chain crosses the membrane as a helical span at residues 102–122 (WVNDLVGHIAFAPLIYPFHSW). Residues 126-130 (HDHHH) carry the Histidine box-2 motif. A run of 2 helical transmembrane segments spans residues 199–219 (IAVV…TTGV) and 222–242 (FVKF…TFTI). A Histidine box-3 motif is present at residues 290–294 (HHLSV).

It belongs to the fatty acid desaturase type 2 family. The cofactor is Fe(2+).

Its subcellular location is the membrane. It carries out the reaction a 1-[(9Z)-octadecenoyl]-2-acyl-glycerolipid + 2 reduced [2Fe-2S]-[ferredoxin] + O2 + 2 H(+) = a 1-[(9Z,12Z)-octadecdienoyl]-2-acyl-glycerolipid + 2 oxidized [2Fe-2S]-[ferredoxin] + 2 H2O. The protein operates within lipid metabolism; polyunsaturated fatty acid biosynthesis. Functionally, desaturase involved in fatty acid biosynthesis. Introduces a double bond at carbon 12 of oleoyl groups (18:1) attached to the sn-1 position of the glycerol moiety of membrane glycerolipids. This enzyme is involved in chilling tolerance because the phase transition temperature of lipids of cellular membranes depends on the degree of unsaturation of fatty acids of the membrane lipids. This is sn-1 oleoyl-lipid 12-desaturase from Synechocystis sp. (strain ATCC 27184 / PCC 6803 / Kazusa).